The chain runs to 290 residues: Xyloglucan endotransglycosylase/hydrolase protein 8 (290 aa).

The signal sequence occupies residues 1-25 (MAKHLALSVAAAVAVSWLAASSAAA). In terms of domain architecture, GH16 spans 26–218 (AGFYEKFDVV…WSGAPFVVSY (193 aa)). E106 functions as the Nucleophile in the catalytic mechanism. E110 serves as the catalytic Proton donor. E110 is a binding site for xyloglucan. N-linked (GlcNAc...) asparagine glycosylation is present at N114. Residues 123–125 (NTN), 133–135 (KKE), and 197–198 (YW) each bind xyloglucan. Disulfide bonds link C226–C240 and C273–C287. Residue R278 participates in xyloglucan binding.

The protein belongs to the glycosyl hydrolase 16 family. XTH group 2 subfamily. In terms of processing, contains at least one intrachain disulfide bond essential for its enzymatic activity. Transcript strongly detected in leaf sheaths. Weakly or not expressed in leaf blades, roots and calli. Accumulation of transcript detected in shoot apex meristem, vascular tissues, young leaves, vascular bundles of leaf sheaths, and peripheral cylinder of the vascular bundles and fibers in the nodal region.

The protein localises to the secreted. It localises to the cell wall. The protein resides in the extracellular space. Its subcellular location is the apoplast. It carries out the reaction breaks a beta-(1-&gt;4) bond in the backbone of a xyloglucan and transfers the xyloglucanyl segment on to O-4 of the non-reducing terminal glucose residue of an acceptor, which can be a xyloglucan or an oligosaccharide of xyloglucan.. In terms of biological role, catalyzes xyloglucan endohydrolysis (XEH) and/or endotransglycosylation (XET). Cleaves and religates xyloglucan polymers, an essential constituent of the primary cell wall, and thereby participates in cell wall construction of growing tissues. May promote elongation of three internodes (II, III and IV) and may be involved in cell elongation processes. This chain is Xyloglucan endotransglycosylase/hydrolase protein 8 (XTH8), found in Oryza sativa subsp. japonica (Rice).